Here is a 923-residue protein sequence, read N- to C-terminus: Protein translocase subunit SecA (923 aa).

Residues Gln86, Gly104–Thr108, and Asp512 each bind ATP. Residues Cys906, Cys908, Cys917, and His918 each contribute to the Zn(2+) site.

Belongs to the SecA family. In terms of assembly, monomer and homodimer. Part of the essential Sec protein translocation apparatus which comprises SecA, SecYEG and auxiliary proteins SecDF-YajC and YidC. It depends on Zn(2+) as a cofactor.

Its subcellular location is the cell inner membrane. It is found in the cytoplasm. The enzyme catalyses ATP + H2O + cellular proteinSide 1 = ADP + phosphate + cellular proteinSide 2.. Its function is as follows. Part of the Sec protein translocase complex. Interacts with the SecYEG preprotein conducting channel. Has a central role in coupling the hydrolysis of ATP to the transfer of proteins into and across the cell membrane, serving both as a receptor for the preprotein-SecB complex and as an ATP-driven molecular motor driving the stepwise translocation of polypeptide chains across the membrane. In Caulobacter vibrioides (strain ATCC 19089 / CIP 103742 / CB 15) (Caulobacter crescentus), this protein is Protein translocase subunit SecA.